Consider the following 470-residue polypeptide: Ribulose bisphosphate carboxylase large chain (470 aa).

Substrate is bound by residues N118 and T168. K170 functions as the Proton acceptor in the catalytic mechanism. Residue K172 coordinates substrate. 3 residues coordinate Mg(2+): K196, D198, and E199. K196 bears the N6-carboxylysine mark. The active-site Proton acceptor is the H289. R290, H322, and S374 together coordinate substrate. Residues 459 to 465 (EIKFEFD) carry the Interacts with RbcX2 motif.

This sequence belongs to the RuBisCO large chain family. Type I subfamily. As to quaternary structure, heterohexadecamer of 8 large chains and 8 small chains; disulfide-linked. The disulfide link is formed within the large subunit homodimers. Requires Mg(2+) as cofactor. Post-translationally, the disulfide bond which can form in the large chain dimeric partners within the hexadecamer appears to be associated with oxidative stress and protein turnover.

The protein resides in the carboxysome. It carries out the reaction 2 (2R)-3-phosphoglycerate + 2 H(+) = D-ribulose 1,5-bisphosphate + CO2 + H2O. It catalyses the reaction D-ribulose 1,5-bisphosphate + O2 = 2-phosphoglycolate + (2R)-3-phosphoglycerate + 2 H(+). RuBisCO catalyzes two reactions: the carboxylation of D-ribulose 1,5-bisphosphate, the primary event in carbon dioxide fixation, as well as the oxidative fragmentation of the pentose substrate in the photorespiration process. Both reactions occur simultaneously and in competition at the same active site. The protein is Ribulose bisphosphate carboxylase large chain of Picosynechococcus sp. (strain ATCC 27264 / PCC 7002 / PR-6) (Agmenellum quadruplicatum).